Consider the following 268-residue polypeptide: Tryptophan synthase alpha chain (268 aa).

Residues Glu49 and Asp60 each act as proton acceptor in the active site.

This sequence belongs to the TrpA family. In terms of assembly, tetramer of two alpha and two beta chains.

It carries out the reaction (1S,2R)-1-C-(indol-3-yl)glycerol 3-phosphate + L-serine = D-glyceraldehyde 3-phosphate + L-tryptophan + H2O. It functions in the pathway amino-acid biosynthesis; L-tryptophan biosynthesis; L-tryptophan from chorismate: step 5/5. Its function is as follows. The alpha subunit is responsible for the aldol cleavage of indoleglycerol phosphate to indole and glyceraldehyde 3-phosphate. This is Tryptophan synthase alpha chain from Xylella fastidiosa (strain M23).